We begin with the raw amino-acid sequence, 404 residues long: SL1278 acyltransferase Chp1 (404 aa).

The Periplasmic portion of the chain corresponds to 1 to 42 (MKCPGVSDCVATVRHDNVFAIAAGLRWSAAVPPLHKGDAVTK). A helical transmembrane segment spans residues 43–63 (LLVGAIAGGMLACAAILGDGI). Residues 64–404 (ASADTALIVP…RGLLPKGKKH (341 aa)) are Cytoplasmic-facing. A PE-PPE domain is found at 104–325 (PTATRHVVSY…LRPIIDRAYQ (222 aa)).

This sequence belongs to the mycobacterial PPE family.

It is found in the cell inner membrane. The catalysed reaction is 3 3'-(hydroxy)phthioceranyl-2'-palmitoyl(stearoyl)-2-O-sulfo-alpha,alpha-trehalose = 3,6,6'-tris-(hydroxy)phthioceranyl-2-palmitoyl(stearoyl)-2'-sulfo-alpha-alpha-trehalose + 2 2'-palmitoyl/stearoyl-2-O-sulfo-alpha,alpha-trehalose.. Activity is potentiated by the SL-1 transporter MmpL8. Inhibited by the lipase inhibitor tetrahydrolipstatin (THL). Involved in the final steps of the cell wall sulfolipid-1 (SL-1) biosynthesis. Catalyzes two successive acylations of the precursor 2-palmitoyl-3-(C43)-phthioceranyl-alpha, alpha'-D-trehalose-2'-sulfate (SL1278) to yield the tetraacylated sulfolipid SL-1. This Mycobacterium tuberculosis (strain ATCC 25618 / H37Rv) protein is SL1278 acyltransferase Chp1.